The chain runs to 227 residues: Thymidylate kinase (227 aa).

16-23 is an ATP binding site; sequence GIDGAGKT.

Belongs to the thymidylate kinase family.

The catalysed reaction is dTMP + ATP = dTDP + ADP. In terms of biological role, phosphorylation of dTMP to form dTDP in both de novo and salvage pathways of dTTP synthesis. The chain is Thymidylate kinase from Xanthomonas oryzae pv. oryzae (strain MAFF 311018).